Reading from the N-terminus, the 386-residue chain is LL-diaminopimelate aminotransferase (386 aa).

The substrate site is built by Y13 and G38. Pyridoxal 5'-phosphate is bound by residues Y67, 101-102, Y126, N176, Y207, and 235-237; these read SK and SLS. The substrate site is built by K102, Y126, and N176. K238 carries the N6-(pyridoxal phosphate)lysine modification. R246 lines the pyridoxal 5'-phosphate pocket. R364 is a binding site for substrate.

Belongs to the class-I pyridoxal-phosphate-dependent aminotransferase family. LL-diaminopimelate aminotransferase subfamily. Homodimer. Pyridoxal 5'-phosphate serves as cofactor.

It carries out the reaction (2S,6S)-2,6-diaminopimelate + 2-oxoglutarate = (S)-2,3,4,5-tetrahydrodipicolinate + L-glutamate + H2O + H(+). Its pathway is amino-acid biosynthesis; L-lysine biosynthesis via DAP pathway; LL-2,6-diaminopimelate from (S)-tetrahydrodipicolinate (aminotransferase route): step 1/1. Involved in the synthesis of meso-diaminopimelate (m-DAP or DL-DAP), required for both lysine and peptidoglycan biosynthesis. Catalyzes the direct conversion of tetrahydrodipicolinate to LL-diaminopimelate. The protein is LL-diaminopimelate aminotransferase of Natranaerobius thermophilus (strain ATCC BAA-1301 / DSM 18059 / JW/NM-WN-LF).